We begin with the raw amino-acid sequence, 993 residues long: Ephrin type-B receptor 3 (993 aa).

The N-terminal stretch at 1-29 is a signal peptide; sequence MAGARPPPGLLPLLAPLLLPLLLPAGCWA. At 30–554 the chain is on the extracellular side; that stretch reads LEETLMDTKW…AQQLQEQLPL (525 aa). The 179-residue stretch at 31–209 folds into the Eph LBD domain; sequence EETLMDTKWV…FYKKCASTTA (179 aa). A disulfide bridge connects residues Cys73 and Cys191. Fibronectin type-III domains lie at 331 to 446 and 447 to 540; these read VPSP…TNQA and APSE…TTSE. Residues Asn343 and Asn440 are each glycosylated (N-linked (GlcNAc...) asparagine). Residues 555–575 form a helical membrane-spanning segment; sequence IVGSTVAGFVFMVVVVVIALV. Residues 576–993 lie on the Cytoplasmic side of the membrane; it reads CLRKQRHGPD…QMNQTLPVQV (418 aa). Residue Tyr609 is modified to Phosphotyrosine; by autocatalysis. Positions 628–891 constitute a Protein kinase domain; the sequence is VKIEEVIGAG…QIVNTLDKLI (264 aa). Residues 634 to 642 and Lys660 each bind ATP; that span reads IGAGEFGEV. Catalysis depends on Asp753, which acts as the Proton acceptor. One can recognise an SAM domain in the interval 920–984; the sequence is TTFTTVGDWL…LCSIQDMRLQ (65 aa). Residues 991–993 carry the PDZ-binding motif; sequence VQV.

The protein belongs to the protein kinase superfamily. Tyr protein kinase family. Ephrin receptor subfamily. In terms of assembly, heterotetramer upon binding of the ligand. The heterotetramer is composed of an ephrin dimer and a receptor dimer. Oligomerization is probably required to induce biological responses. In terms of processing, phosphorylated. Autophosphorylates upon ligand-binding. Autophosphorylation on Tyr-609 is required for interaction with SH2 domain-containing proteins. Ubiquitinated by RNF186, mainly through 'Lys-48' and 'Lys-63'-linked polyubiquitin chains. In terms of tissue distribution, expressed in cells of the retinal ganglion cell layer during retinal axon guidance to the optic disk. Expressed by Paneth and progenitor cells in the crypts of the intestinal epithelium (at protein level). Expressed in myogenic progenitor cells.

Its subcellular location is the cell membrane. It localises to the cell projection. The protein resides in the dendrite. It catalyses the reaction L-tyrosyl-[protein] + ATP = O-phospho-L-tyrosyl-[protein] + ADP + H(+). In terms of biological role, receptor tyrosine kinase which binds promiscuously transmembrane ephrin-B family ligands residing on adjacent cells, leading to contact-dependent bidirectional signaling into neighboring cells. The signaling pathway downstream of the receptor is referred to as forward signaling while the signaling pathway downstream of the ephrin ligand is referred to as reverse signaling. Generally has an overlapping and redundant function with EPHB2. Like EPHB2, functions in axon guidance during development regulating for instance the neurons forming the corpus callosum and the anterior commissure, 2 major interhemispheric connections between the temporal lobes of the cerebral cortex. In addition to its role in axon guidance also plays an important redundant role with other ephrin-B receptors in development and maturation of dendritic spines and the formation of excitatory synapses. Controls other aspects of development through regulation of cell migration and positioning. This includes angiogenesis, palate development and thymic epithelium development for instance. Forward and reverse signaling through the EFNB2/EPHB3 complex also regulate migration and adhesion of cells that tubularize the urethra and septate the cloaca. Finally, plays an important role in intestinal epithelium differentiation segregating progenitor from differentiated cells in the crypt. The sequence is that of Ephrin type-B receptor 3 (Ephb3) from Mus musculus (Mouse).